Reading from the N-terminus, the 309-residue chain is Ribosomal RNA small subunit methyltransferase H (309 aa).

S-adenosyl-L-methionine is bound by residues 33–35 (GGH), Asp-53, Phe-79, Asp-100, and Gln-107.

This sequence belongs to the methyltransferase superfamily. RsmH family.

It localises to the cytoplasm. It carries out the reaction cytidine(1402) in 16S rRNA + S-adenosyl-L-methionine = N(4)-methylcytidine(1402) in 16S rRNA + S-adenosyl-L-homocysteine + H(+). In terms of biological role, specifically methylates the N4 position of cytidine in position 1402 (C1402) of 16S rRNA. This chain is Ribosomal RNA small subunit methyltransferase H, found in Clostridium botulinum (strain Langeland / NCTC 10281 / Type F).